The primary structure comprises 879 residues: MELASKYNPADVEGKWYQYWLEHRLFSSKPDGREPYTIVIPPPNVTGVLHMGHMLNNTIQDILVRRARMEGKNACWVPGTDHASIATEAKVVNKLAAQGIKKTDLTRDEFLKHAWDWTEEHGGIILKQLRKLGASCDWDRTAFTMDEERSKSVLKVFVDLYNKGLIYRGVRMVNWDPKALTALSDEEVIYKEEHGKLFYLRYKVEGDPEGRYAVVATTRPETIMGDTAMCINPNDPKNAWLKGKKVIVPLVNRVIPVIEDDYVDIEFGTGCLKVTPAHDVNDYMLGEKYNLPSIDIFNDNGTLSEAAGLYIGMDRFDVRKQIEKDLDAAGLLEKTEAYTNKVGYSERTNVVIEPKLSMQWFLKMQHFADMALPPVMNDELKFYPAKYKNTYRHWMENIKDWCISRQLWWGHRIPAYFLPEGGYVVAATPEEALAKAKEKTGNAALTMDDLRQDEDCLDTWFSSWLWPISLFDGINHPGNEEISYYYPTSDLVTGPDIIFFWVARMIMVGYEYEGKMPFKNVYFTGIVRDKLGRKMSKSLGNSPDPLELIDKYGADGVRMGMMLAAPAGNDILFDDALCEQGRNFCSKIWNAFRLIKGWTVDDNIQASDAAKLAVHWFESKQNEVAAEVADLFSKYRLSEALMAVYKLFWDEFSSWYLEMIKPAYGQGIDRTTYSATLCFLDNLLHLLHPFMPFITEELWQQMYERNAEEGESLMVSALSMDTYVDTAFVAQFEVVKGVISNIRSIRLQKNIAQKEPLDLQVLGENPVAEFNAVIQKMCNLSSITVVESKAEGASSFMVGTTEYAVPLGNMIDVEAEIARMEAELKHKEGFLQGVLKKLSNEKFINNAPAAVLEMERKKQADAESIISSLKESIAALKKA.

The 'HIGH' region signature appears at 43–53 (PNVTGVLHMGH). Positions 534–538 (KMSKS) match the 'KMSKS' region motif. Lys537 contacts ATP. Positions 807–878 (LGNMIDVEAE…LKESIAALKK (72 aa)) form a coiled coil.

It belongs to the class-I aminoacyl-tRNA synthetase family. ValS type 1 subfamily. Monomer.

The protein resides in the cytoplasm. The catalysed reaction is tRNA(Val) + L-valine + ATP = L-valyl-tRNA(Val) + AMP + diphosphate. Its function is as follows. Catalyzes the attachment of valine to tRNA(Val). As ValRS can inadvertently accommodate and process structurally similar amino acids such as threonine, to avoid such errors, it has a 'posttransfer' editing activity that hydrolyzes mischarged Thr-tRNA(Val) in a tRNA-dependent manner. This Bacteroides thetaiotaomicron (strain ATCC 29148 / DSM 2079 / JCM 5827 / CCUG 10774 / NCTC 10582 / VPI-5482 / E50) protein is Valine--tRNA ligase.